A 275-amino-acid chain; its full sequence is uncharacterized protein (275 aa).

The span at 148–158 (TFPTTAPSITP) shows a compositional bias: polar residues. The segment at 148 to 173 (TFPTTAPSITPGNKEGEKTTSTDTDE) is disordered. The helical transmembrane segment at 187–207 (ILIAVTLLLSGVAIIVFVIFE) threads the bilayer. Residues 234–264 (GQPPGTAESKPDSQPQKVGQDAANSSNPKKA) are disordered. Residues 245–261 (DSQPQKVGQDAANSSNP) are compositionally biased toward polar residues.

The protein localises to the membrane. This is an uncharacterized protein from Homo sapiens (Human).